A 688-amino-acid polypeptide reads, in one-letter code: Protein sel-1 homolog 2 (688 aa).

The first 18 residues, 1–18 (MNPLALLVEILIIIEVTT), serve as a signal peptide directing secretion. Over 19–662 (KNSEAERYNR…KWKWLKLDST (644 aa)) the chain is Extracellular. A glycan (N-linked (GlcNAc...) asparagine) is linked at asparagine 34. 11 Sel1-like repeats span residues 107-142 (GDELFKMGNKILQESKSQKQKTEAYTFFTRAADMGN), 143-178 (LKAMEKMADALLFGSFGMQNITAAIQLYESLAKEGS), 179-214 (YKAQNALGFLSSYGIGMEYDQAKALIYYTFGSAGGS), 215-250 (MMSQMILGYRYLSGINVLQNCEVALNHYKKVADYIA), 297-333 (VQIQVSLGQLHLIGRKGLDQDYSKALYYFLKAAKAGS), 334-370 (ANAMAFIGKMYLEGNAAAPQNNATAFKYFSMAASKGN), 371-406 (AIGLHGLGLLYFHGKGVPVNYGEALKYFQKAAEKGW), 407-442 (PNAQFHLGFMYYSGSGVWKDYKLAFKYFYLASQSGQ), 443-478 (PLAIYYLAEMYATGTGVLRSCRTAVEPYKGVCELGH), 551-586 (AFARVKIGDYHYYGYGTKKDYETAATHYSIAADKHH), and 588-623 (AQAMFNLAYMYEHGLGIAQDIHLARRLYDMAAQTSP). Asparagine 162 carries an N-linked (GlcNAc...) asparagine glycan. The chain crosses the membrane as a helical span at residues 663–683 (IGPYWDLLVIGLIVVVLIFLL). Residues 684 to 688 (RNHHR) are Cytoplasmic-facing.

This sequence belongs to the sel-1 family.

The protein resides in the membrane. Its subcellular location is the cell projection. It is found in the cilium. It localises to the nucleus speckle. This chain is Protein sel-1 homolog 2 (Sel1l2), found in Rattus norvegicus (Rat).